The chain runs to 280 residues: Putative sugar uptake protein (280 aa).

Helical transmembrane passes span 4–21 (LIAL…LIAG), 33–52 (MGLG…IHPA), 56–78 (ITIF…GQFI), 91–113 (LSTG…EWTS), 117–136 (YLIG…LTAI), 149–166 (IILL…SSFP), 176–195 (LFLP…LLVS), 207–229 (WLNI…SAQL), 233–255 (ITAF…FFIG), and 262–279 (ELIA…GAAI).

The protein belongs to the GRP transporter (TC 2.A.7.5) family.

The protein localises to the cell membrane. This chain is Putative sugar uptake protein, found in Lactobacillus helveticus (Lactobacillus suntoryeus).